The chain runs to 114 residues: Class I hydrophobin SC16 (114 aa).

Residues 1 to 17 form the signal peptide; it reads MRFFATLVLALPALAMA. 4 disulfide bridges follow: Cys33–Cys93, Cys40–Cys87, Cys41–Cys74, and Cys94–Cys107. Asn42 is a glycosylation site (N-linked (GlcNAc...) asparagine).

Belongs to the fungal hydrophobin family. Self-assembles to form functional amyloid fibrils called rodlets. Self-assembly into fibrillar rodlets occurs spontaneously at hydrophobic:hydrophilic interfaces and the rodlets further associate laterally to form amphipathic monolayers.

It localises to the secreted. The protein resides in the cell wall. Aerial growth, conidiation, and dispersal of filamentous fungi in the environment rely upon a capability of their secreting small amphipathic proteins called hydrophobins (HPBs) with low sequence identity. Class I can self-assemble into an outermost layer of rodlet bundles on aerial cell surfaces, conferring cellular hydrophobicity that supports fungal growth, development and dispersal; whereas Class II form highly ordered films at water-air interfaces through intermolecular interactions but contribute nothing to the rodlet structure. This is Class I hydrophobin SC16 from Schizophyllum commune (strain H4-8 / FGSC 9210) (Split gill fungus).